The following is an 843-amino-acid chain: MIDREAPAAVLAPTPLLRHAIERACRRIAPVWPLKNFVAVNPFLGFSDRSFHATCAMLHRVARIDTLMPRAFYREAIRNGTIETADLAAALAAAPADWRLPTEAAELLKLADNDRIARKPPAVVATVAEVLNELAAGDRHVARTAFMTDEISRWCAAYFDEGQSVWRMPARGLRPYAAWRAWVRYDRNPEMMGIARFRALVADMPDDYVAAIATVIERLGIPARAVEDYLHQALLEIGGWAAYARYLMWNHELAGDRDDTLEQLLAIRVVWGYTLFAQRTDTAFREAWRRAMEQAALPPLDDQLGGDPDFCINMVLQEAYEIAFRRRLLDRLAGAPAARTAGARPAVQAAFCIDVRSEVYRRAMESVGDGVETVGFAGFFGFPIEFVPIGHVTGRAHCPVLLRPQFTVCEAVGGTSEEEDSEILVMRLLRRRVRKAWKSFKLSAVSSFIYVETAGLLFAGKILSDSLAVTRTVHDPNTDGLDDDLIGRLGPRIEPRPVGGRATGFDPAQRVAMAEAVLRAMSMTGPFARLVMLTGHGSTTVNNPHASGLDCGACGGHTGEANARVAAAILNDPDVRVALRQRGIDIPDDTVFLGCLHDTTTDVIRLFDIEQLPASHADDLRRLRALLAKATSLTRLERAALLGIARGAATEQQVVTRSRDWAQVRPEWGLAGNASFIAAPRARTRGIDLGGRSFLHDYDWQQDKDFGTLQLIMTAPMVVASWINLQYYGSTVNNAAFGAGNKVLHNVVGTLGVLEGNAGDLKVGLPWQSVHDGSRFVHEPLRLTVLIEAPLEAINGVIAKNDIVRELVDHHWLHLYAISPQGRVSHAYRGHLLWQQLEERSES.

Positions 352, 354, 536, and 551 each coordinate Zn(2+).

The protein belongs to the inorganic carbon transporter (TC 9.A.2) DabA family. As to quaternary structure, forms a complex with DabB. Zn(2+) serves as cofactor.

The protein resides in the cell inner membrane. Functionally, part of an energy-coupled inorganic carbon pump. The protein is Probable inorganic carbon transporter subunit DabA 2 of Bradyrhizobium sp. (strain BTAi1 / ATCC BAA-1182).